The primary structure comprises 160 residues: Small ribosomal subunit protein uS7 (160 aa).

Belongs to the universal ribosomal protein uS7 family. As to quaternary structure, part of the 30S ribosomal subunit. Contacts proteins S9 and S11.

One of the primary rRNA binding proteins, it binds directly to 16S rRNA where it nucleates assembly of the head domain of the 30S subunit. Is located at the subunit interface close to the decoding center, probably blocks exit of the E-site tRNA. The chain is Small ribosomal subunit protein uS7 from Ehrlichia ruminantium (strain Gardel).